Consider the following 462-residue polypeptide: MPREIITCQVGQCGNQIGMEFWKQLCMEHGINPEGILEEYAQNGEDRKDVFFYQADDEHYVPRAVLIDLEPRVINGIQKSPYASLYNPENIFISKHGGGAGNNWGRGYCDAEKVQEEIIEMIDREADGSDSLEGFVLTHSIAGGTGSGFGSYLLERLNDHYPKKLIQTYSVFPNENDVVVQPYNCLLSMKRLILNADCVVVLDNTALTSIAVDRLKLLQPTFPQINSIVSTVMAASTTTLRYPGYMNNDLVGLIASLVPTPRCHFLMTGYTPLSLIDQKVTSVRKTTVLDVMRRLLQTKNIMATGAIKKGAYMSILNIIQGDVDPTQVHKSLQRIRERKLANFIPWGPASIQVALSKKSPYMESGHKVSGLMLANHTGIRSIFKVIYDQYRTFRKRDAYMNIFKQTKIFEDNLDEFDSSDEVVKSLIEDSAAAEKMDYINWGNDDDDMGYDPRAPPNFSSMQ.

142–148 contacts GTP; it reads AGGTGSG.

This sequence belongs to the tubulin family.

It localises to the cytoplasm. The protein resides in the cytoskeleton. The protein localises to the microtubule organizing center. It is found in the centrosome. Tubulin is the major constituent of microtubules. The gamma chain is found at microtubule organizing centers (MTOC) such as the spindle poles or the centrosome, suggesting that it is involved in the minus-end nucleation of microtubule assembly. In Euplotes crassus, this protein is Tubulin gamma-1 chain.